The primary structure comprises 247 residues: ATP synthase subunit a, chloroplastic (247 aa).

5 consecutive transmembrane segments (helical) span residues Gln38–Val58, Val95–Leu115, Ile134–Ser154, Leu199–Leu219, and Gly220–Gly240.

Belongs to the ATPase A chain family. In terms of assembly, F-type ATPases have 2 components, CF(1) - the catalytic core - and CF(0) - the membrane proton channel. CF(1) has five subunits: alpha(3), beta(3), gamma(1), delta(1), epsilon(1). CF(0) has four main subunits: a, b, b' and c.

Its subcellular location is the plastid. It is found in the chloroplast thylakoid membrane. In terms of biological role, key component of the proton channel; it plays a direct role in the translocation of protons across the membrane. The polypeptide is ATP synthase subunit a, chloroplastic (Lemna minor (Common duckweed)).